A 200-amino-acid polypeptide reads, in one-letter code: uncharacterized protein (200 aa).

In terms of domain architecture, Response regulatory spans 3–119; it reads RLFIAEDQRM…DLADAIRKCV (117 aa). Aspartate 54 is subject to 4-aspartylphosphate. The HTH luxR-type domain occupies 133–198; it reads MMRDENPLTV…EAASIAEEKG (66 aa). A DNA-binding region (H-T-H motif) is located at residues 157-176; it reads TKDITLELYLSQGTVRNYIS.

Post-translationally, phosphorylated by YvfT.

It is found in the cytoplasm. In terms of biological role, member of the two-component regulatory system YvfT/YvfU. This is an uncharacterized protein from Bacillus subtilis (strain 168).